The chain runs to 329 residues: Carbohydrate sulfotransferase chst-1 (329 aa).

Residues methionine 1–lysine 3 lie on the Cytoplasmic side of the membrane. A helical; Signal-anchor for type II membrane protein transmembrane segment spans residues tryptophan 4–phenylalanine 23. The Lumenal portion of the chain corresponds to threonine 24–serine 329. Residues lysine 91 to leucine 97 and arginine 157 to serine 165 contribute to the 3'-phosphoadenylyl sulfate site.

The protein belongs to the sulfotransferase 2 family. As to expression, highly expressed in the head and tail of hermaphrodites, in particular in amphid and phasmid sheath cells.

Its subcellular location is the golgi apparatus membrane. The catalysed reaction is chondroitin beta-D-glucuronate + n 3'-phosphoadenylyl sulfate = chondroitin 4'-sulfate + n adenosine 3',5'-bisphosphate + n H(+). Its function is as follows. Catalyzes the transfer of sulfate to position 4 of non-reducing N-acetylgalactosamine (GalNAc) residue of chondroitin. The polypeptide is Carbohydrate sulfotransferase chst-1 (Caenorhabditis elegans).